The sequence spans 229 residues: 5'-methylthioadenosine/S-adenosylhomocysteine nucleosidase (229 aa).

The Proton acceptor role is filled by Glu-12. Substrate is bound by residues Gly-78, Ile-152, and 173-174; that span reads ME. The active-site Proton donor is Asp-197.

It belongs to the PNP/UDP phosphorylase family. MtnN subfamily.

It catalyses the reaction S-adenosyl-L-homocysteine + H2O = S-(5-deoxy-D-ribos-5-yl)-L-homocysteine + adenine. The enzyme catalyses S-methyl-5'-thioadenosine + H2O = 5-(methylsulfanyl)-D-ribose + adenine. The catalysed reaction is 5'-deoxyadenosine + H2O = 5-deoxy-D-ribose + adenine. Its pathway is amino-acid biosynthesis; L-methionine biosynthesis via salvage pathway; S-methyl-5-thio-alpha-D-ribose 1-phosphate from S-methyl-5'-thioadenosine (hydrolase route): step 1/2. Catalyzes the irreversible cleavage of the glycosidic bond in both 5'-methylthioadenosine (MTA) and S-adenosylhomocysteine (SAH/AdoHcy) to adenine and the corresponding thioribose, 5'-methylthioribose and S-ribosylhomocysteine, respectively. Also cleaves 5'-deoxyadenosine, a toxic by-product of radical S-adenosylmethionine (SAM) enzymes, into 5-deoxyribose and adenine. The sequence is that of 5'-methylthioadenosine/S-adenosylhomocysteine nucleosidase from Mannheimia succiniciproducens (strain KCTC 0769BP / MBEL55E).